Here is a 208-residue protein sequence, read N- to C-terminus: MADMKRLKHLMFSPFIDNNPIALQVLGICSALAVTTKLQTAIVMGISVALVTGFSSFFISLVRNYIPNSIRIIVQMAIIASLVTLVDQLLQAFAYELSKQLSVFVGLIITNCIVMGRAEAFAMKEPPLESLIDGIGNGAGYGIMLLVVATVRELIGSGKLLGYTVFQTVQDGGWYQTNGLFLLAPSAFFIIGFLIWGLRTWKPEQAEE.

The next 5 helical transmembrane spans lie at 42 to 62 (IVMG…ISLV), 72 to 92 (IIVQ…LLQA), 103 to 123 (VFVG…AFAM), 131 to 151 (LIDG…VATV), and 178 to 198 (NGLF…IWGL).

The protein belongs to the NqrDE/RnfAE family. As to quaternary structure, composed of six subunits; NqrA, NqrB, NqrC, NqrD, NqrE and NqrF.

Its subcellular location is the cell inner membrane. The catalysed reaction is a ubiquinone + n Na(+)(in) + NADH + H(+) = a ubiquinol + n Na(+)(out) + NAD(+). NQR complex catalyzes the reduction of ubiquinone-1 to ubiquinol by two successive reactions, coupled with the transport of Na(+) ions from the cytoplasm to the periplasm. NqrA to NqrE are probably involved in the second step, the conversion of ubisemiquinone to ubiquinol. The polypeptide is Na(+)-translocating NADH-quinone reductase subunit D (Neisseria meningitidis serogroup B (strain ATCC BAA-335 / MC58)).